Reading from the N-terminus, the 81-residue chain is MAERSQNLQDLFLNSVRKSKNPLTIFLINGVKLTGVVTSFDNFCVLLRRDGHSQLVYKHAISTIMPSQPVQMFDGEESQGA.

The Sm domain occupies 10–70; sequence DLFLNSVRKS…ISTIMPSQPV (61 aa).

It belongs to the Hfq family. As to quaternary structure, homohexamer.

In terms of biological role, RNA chaperone that binds small regulatory RNA (sRNAs) and mRNAs to facilitate mRNA translational regulation in response to envelope stress, environmental stress and changes in metabolite concentrations. Also binds with high specificity to tRNAs. This is RNA-binding protein Hfq from Mesorhizobium japonicum (strain LMG 29417 / CECT 9101 / MAFF 303099) (Mesorhizobium loti (strain MAFF 303099)).